Consider the following 190-residue polypeptide: Protein GrpE (190 aa).

The interval 1–42 (MNEKDNQTTSEPENEQEIIDVNDSGEQPEENETEQPQEEAVE) is disordered. Residues 26 to 42 (EQPEENETEQPQEEAVE) are compositionally biased toward acidic residues.

It belongs to the GrpE family. In terms of assembly, homodimer.

Its subcellular location is the cytoplasm. In terms of biological role, participates actively in the response to hyperosmotic and heat shock by preventing the aggregation of stress-denatured proteins, in association with DnaK and GrpE. It is the nucleotide exchange factor for DnaK and may function as a thermosensor. Unfolded proteins bind initially to DnaJ; upon interaction with the DnaJ-bound protein, DnaK hydrolyzes its bound ATP, resulting in the formation of a stable complex. GrpE releases ADP from DnaK; ATP binding to DnaK triggers the release of the substrate protein, thus completing the reaction cycle. Several rounds of ATP-dependent interactions between DnaJ, DnaK and GrpE are required for fully efficient folding. The protein is Protein GrpE of Oceanobacillus iheyensis (strain DSM 14371 / CIP 107618 / JCM 11309 / KCTC 3954 / HTE831).